Here is a 156-residue protein sequence, read N- to C-terminus: Endoribonuclease YbeY (156 aa).

Zn(2+) contacts are provided by His-117, His-121, and His-127.

The protein belongs to the endoribonuclease YbeY family. Requires Zn(2+) as cofactor.

Its subcellular location is the cytoplasm. Single strand-specific metallo-endoribonuclease involved in late-stage 70S ribosome quality control and in maturation of the 3' terminus of the 16S rRNA. The polypeptide is Endoribonuclease YbeY (Shewanella frigidimarina (strain NCIMB 400)).